A 585-amino-acid chain; its full sequence is Putative phospholipase B-like 2 (585 aa).

An N-terminal signal peptide occupies residues 1-35 (MAAPMDRTHGGRAARALRRALALASLAGLLLSGLA). Residues Asn84, Asn102, and Asn106 are each glycosylated (N-linked (GlcNAc...) asparagine). A disulfide bridge connects residues Cys138 and Cys148. N-linked (GlcNAc...) asparagine glycosylation is found at Asn227 and Asn432. Cys488 and Cys491 are oxidised to a cystine. Residue Asn511 is glycosylated (N-linked (GlcNAc...) asparagine).

It belongs to the phospholipase B-like family. As to quaternary structure, interacts with IGF2R. Glycosylated; contains mannose 6-phosphate sugars.

Its subcellular location is the lysosome lumen. In terms of biological role, putative phospholipase. The protein is Putative phospholipase B-like 2 (Plbd2) of Rattus norvegicus (Rat).